The chain runs to 252 residues: Carbohydrate deacetylase (252 aa).

Mg(2+)-binding residues include H59 and H122.

It belongs to the YdjC deacetylase family. As to quaternary structure, homodimer. Mg(2+) serves as cofactor.

Functionally, probably catalyzes the deacetylation of acetylated carbohydrates an important step in the degradation of oligosaccharides. The protein is Carbohydrate deacetylase of Vibrio vulnificus (strain CMCP6).